The primary structure comprises 413 residues: Porin PorA (413 aa).

Residues 1–22 form the signal peptide; that stretch reads MKKVVSSLLIILGAAMLIFAIA. A disordered region spans residues 265–288; that stretch reads TKSAADSKDDKKKDGDKKDEKSPE.

The protein belongs to the PorA family.

It is found in the secreted. It localises to the cell wall. Forms water-filled channels that favor the permeation of cations. The polypeptide is Porin PorA (Corynebacterium resistens (strain DSM 45100 / JCM 12819 / GTC 2026 / SICGH 158)).